Here is a 120-residue protein sequence, read N- to C-terminus: Large ribosomal subunit protein uL22 (120 aa).

The protein belongs to the universal ribosomal protein uL22 family. As to quaternary structure, part of the 50S ribosomal subunit.

This protein binds specifically to 23S rRNA; its binding is stimulated by other ribosomal proteins, e.g. L4, L17, and L20. It is important during the early stages of 50S assembly. It makes multiple contacts with different domains of the 23S rRNA in the assembled 50S subunit and ribosome. In terms of biological role, the globular domain of the protein is located near the polypeptide exit tunnel on the outside of the subunit, while an extended beta-hairpin is found that lines the wall of the exit tunnel in the center of the 70S ribosome. The polypeptide is Large ribosomal subunit protein uL22 (Corynebacterium diphtheriae (strain ATCC 700971 / NCTC 13129 / Biotype gravis)).